The following is a 124-amino-acid chain: uncharacterized protein (124 aa).

2 disordered regions span residues 1–31 (MAQHAFQDQEQEEGRNSRQQKRKSFEDTMKP) and 59–124 (EDAR…YPQP). Composition is skewed to polar residues over residues 65-86 (GMSSVTPTSSASKIGTKTSDAA) and 98-124 (TGEQPSGIQAQNLRGQSSDQSACYPQP).

This is an uncharacterized protein from Bos taurus (Bovine).